The following is a 233-amino-acid chain: Leucyl/phenylalanyl-tRNA--protein transferase (233 aa).

This sequence belongs to the L/F-transferase family.

The protein resides in the cytoplasm. The catalysed reaction is N-terminal L-lysyl-[protein] + L-leucyl-tRNA(Leu) = N-terminal L-leucyl-L-lysyl-[protein] + tRNA(Leu) + H(+). The enzyme catalyses N-terminal L-arginyl-[protein] + L-leucyl-tRNA(Leu) = N-terminal L-leucyl-L-arginyl-[protein] + tRNA(Leu) + H(+). It carries out the reaction L-phenylalanyl-tRNA(Phe) + an N-terminal L-alpha-aminoacyl-[protein] = an N-terminal L-phenylalanyl-L-alpha-aminoacyl-[protein] + tRNA(Phe). In terms of biological role, functions in the N-end rule pathway of protein degradation where it conjugates Leu, Phe and, less efficiently, Met from aminoacyl-tRNAs to the N-termini of proteins containing an N-terminal arginine or lysine. The polypeptide is Leucyl/phenylalanyl-tRNA--protein transferase (Klebsiella pneumoniae subsp. pneumoniae (strain ATCC 700721 / MGH 78578)).